The chain runs to 50 residues: Large ribosomal subunit protein eL40 (50 aa).

It belongs to the eukaryotic ribosomal protein eL40 family.

The chain is Large ribosomal subunit protein eL40 from Aeropyrum pernix (strain ATCC 700893 / DSM 11879 / JCM 9820 / NBRC 100138 / K1).